Here is a 499-residue protein sequence, read N- to C-terminus: AP-1-like transcription factor CAP1 (499 aa).

Positions 1–64 (MTDIKRNFSD…RAYRERKERK (64 aa)) are disordered. 2 consecutive short sequence motifs (bipartite nuclear localization signal) follow at residues 20 to 27 (TKKLHVDS) and 44 to 51 (SKRTAQNR). The bZIP domain occupies 40-103 (TEPKSKRTAQ…DVLKNELAKY (64 aa)). The segment at 43–66 (KSKRTAQNRAAQRAYRERKERKMK) is basic motif. Residues 49 to 105 (QNRAAQRAYRERKERKMKELEDKVRLLEDANVRALTETDFLRAQVDVLKNELAKYTG) are a coiled coil. A leucine-zipper region spans residues 68–75 (LEDKVRLL). Residues 104 to 215 (TGGSDFSDLN…SSTPLNDNLL (112 aa)) are disordered. Polar residues predominate over residues 123–148 (HPNNHHSNVSTGTPHGSMSSSNSVAS). Low complexity-rich tracts occupy residues 155-164 (SSASSVSNNS) and 186-215 (QQQQQKVPQGVPDLVSGSSSSSTPLNDNLL). Positions 254-261 (CVKLNEAC) are n-CRD. 2 cysteine pairs are disulfide-bonded: cysteine 254–cysteine 446 and cysteine 261–cysteine 477. Residues 408–442 (PEKQEKGKYEPPSTSKTTNNNEEEDKDEVVPAPPQ) are disordered. The segment covering 417 to 427 (EPPSTSKTTNN) has biased composition (low complexity). The tract at residues 446 to 477 (CSEIWDRITSHPKYTELDIDGLCNELKSKAKC) is c-CRD. The Nuclear export signal motif lies at 462–469 (LDIDGLCN).

This sequence belongs to the bZIP family. YAP subfamily. In terms of assembly, interacts with YBP1. In terms of processing, upon oxidative stress, is oxidated by the peroxidase GPX3 and stabilized by YBP1. Oxidative stress induces conformational changes through oxidation of cysteine residues, masking the nuclear export signal, thus abolishing nuclear export by CRM1/exportin 1. Phosphorylated in response to H(2)O(2).

The protein localises to the nucleus. It is found in the cytoplasm. Functionally, transcription activator involved in multidrug resistance, oxidative stress response, and redox homeostasis. Preferentially binds to promoters with the core binding site 5'-TTA[CG]TAA-3'. Involved in the oxidative stress response in via multiple pathways, including the cellular antioxidant defense system, carbohydrate metabolism and energy metabolism, protein degradation, ATP-dependent RNA helicase, and resistance pathways. The ability of the major systemic fungal pathogen of humans to sense and respond to reactive oxygen species, such as H(2)O(2) generated by the host immune system, is required for survival in the host and therefore virulence. Regulates the transcription of COR33, GLR1, GTO1, GTT1, GTT1, TRR1, TRX1, SOD1, CAT1, and the transcription regulator TSA1. Participates in the apoptosis by regulating the expression of the glutathione reductase gene and glutathione content. Also plays a role in the peroxide-mediated induction of MDR1 and other drug response genes such as PDR16, MDR1, FLU1, YCF1, and FCR1. Regulates trehalose accumulation which is important for the oxidative stress tolerance. Recruits ADA2 to its target promoters. Activity of CAP1 is controlled through oxidation of specific cysteine residues resulting in the alteration of its subcellular location. Oxidative stress induces nuclear accumulation and as a result CAP1 transcriptional activity. Nuclear export is restored when disulfide bonds are reduced by thioredoxin, whose expression is controlled by CAP1, providing a mechanism for negative autoregulation. In Candida albicans (strain SC5314 / ATCC MYA-2876) (Yeast), this protein is AP-1-like transcription factor CAP1.